Consider the following 160-residue polypeptide: Protein-export protein SecB (160 aa).

It belongs to the SecB family. Homotetramer, a dimer of dimers. One homotetramer interacts with 1 SecA dimer.

It localises to the cytoplasm. One of the proteins required for the normal export of preproteins out of the cell cytoplasm. It is a molecular chaperone that binds to a subset of precursor proteins, maintaining them in a translocation-competent state. It also specifically binds to its receptor SecA. This Agrobacterium fabrum (strain C58 / ATCC 33970) (Agrobacterium tumefaciens (strain C58)) protein is Protein-export protein SecB.